The primary structure comprises 296 residues: Phosphatidylglycerol--prolipoprotein diacylglyceryl transferase (296 aa).

Helical transmembrane passes span 17-37, 59-79, and 97-117; these read LAVR…IVVG, MMFY…VLFY, and GGMS…LFAW. Arg-142 is a binding site for a 1,2-diacyl-sn-glycero-3-phospho-(1'-sn-glycerol). Helical transmembrane passes span 230 to 250 and 265 to 285; these read MGAI…TVEF and LSMG…MMIW.

Belongs to the Lgt family.

It localises to the cell inner membrane. The enzyme catalyses L-cysteinyl-[prolipoprotein] + a 1,2-diacyl-sn-glycero-3-phospho-(1'-sn-glycerol) = an S-1,2-diacyl-sn-glyceryl-L-cysteinyl-[prolipoprotein] + sn-glycerol 1-phosphate + H(+). It participates in protein modification; lipoprotein biosynthesis (diacylglyceryl transfer). Functionally, catalyzes the transfer of the diacylglyceryl group from phosphatidylglycerol to the sulfhydryl group of the N-terminal cysteine of a prolipoprotein, the first step in the formation of mature lipoproteins. The protein is Phosphatidylglycerol--prolipoprotein diacylglyceryl transferase of Burkholderia mallei (strain NCTC 10247).